Here is a 134-residue protein sequence, read N- to C-terminus: Nif-regulating protein A (134 aa).

A C4-type; atypical zinc finger spans residues 3–36; the sequence is CLECGLVYIVSGLKVPEKISVRVFVNRIEHPFTH.

In terms of assembly, interacts with the general archaeal transcription factors TBPs.

In terms of biological role, involved in nitrogen regulation. Enhances the transcription of the nitrogen fixation (nif) operon under nitrogen-limited conditions. Acts by binding to the nifH promoter region. The chain is Nif-regulating protein A from Methanosarcina mazei (strain ATCC BAA-159 / DSM 3647 / Goe1 / Go1 / JCM 11833 / OCM 88) (Methanosarcina frisia).